The primary structure comprises 62 residues: Large ribosomal subunit protein uL29 (62 aa).

The protein belongs to the universal ribosomal protein uL29 family.

This Syntrophotalea carbinolica (strain DSM 2380 / NBRC 103641 / GraBd1) (Pelobacter carbinolicus) protein is Large ribosomal subunit protein uL29.